A 446-amino-acid chain; its full sequence is Chromosomal replication initiator protein DnaA (446 aa).

The segment at 1–72 (MKNISDLWNQ…ADTIYDLTGE (72 aa)) is domain I, interacts with DnaA modulators. A domain II region spans residues 72-109 (EELSIKFVIPQNQNEEDFMPKSPIKKMSKEEPADFPQN). The segment at 110–326 (MLNPKYTFDT…GALIRVVAYS (217 aa)) is domain III, AAA+ region. Residues Gly-154, Gly-156, Lys-157, and Thr-158 each contribute to the ATP site. The domain IV, binds dsDNA stretch occupies residues 327-446 (SLINKDINAD…QIKEIKEQLR (120 aa)).

This sequence belongs to the DnaA family. Oligomerizes as a right-handed, spiral filament on DNA at oriC.

The protein resides in the cytoplasm. Plays an essential role in the initiation and regulation of chromosomal replication. ATP-DnaA binds to the origin of replication (oriC) to initiate formation of the DNA replication initiation complex once per cell cycle. Binds the DnaA box (a 9 base pair repeat at the origin) and separates the double-stranded (ds)DNA. Forms a right-handed helical filament on oriC DNA; dsDNA binds to the exterior of the filament while single-stranded (ss)DNA is stabiized in the filament's interior. The ATP-DnaA-oriC complex binds and stabilizes one strand of the AT-rich DNA unwinding element (DUE), permitting loading of DNA polymerase. After initiation quickly degrades to an ADP-DnaA complex that is not apt for DNA replication. Binds acidic phospholipids. The sequence is that of Chromosomal replication initiator protein DnaA from Bacillus licheniformis (strain ATCC 14580 / DSM 13 / JCM 2505 / CCUG 7422 / NBRC 12200 / NCIMB 9375 / NCTC 10341 / NRRL NRS-1264 / Gibson 46).